A 582-amino-acid polypeptide reads, in one-letter code: Threonine--tRNA ligase (582 aa).

Residues 185–478 are catalytic; the sequence is DHRKLGKELD…LVEHYGGAFP (294 aa). Positions 278, 329, and 455 each coordinate Zn(2+).

It belongs to the class-II aminoacyl-tRNA synthetase family. Homodimer. It depends on Zn(2+) as a cofactor.

It localises to the cytoplasm. It catalyses the reaction tRNA(Thr) + L-threonine + ATP = L-threonyl-tRNA(Thr) + AMP + diphosphate + H(+). Functionally, catalyzes the attachment of threonine to tRNA(Thr) in a two-step reaction: L-threonine is first activated by ATP to form Thr-AMP and then transferred to the acceptor end of tRNA(Thr). Also edits incorrectly charged L-seryl-tRNA(Thr). The polypeptide is Threonine--tRNA ligase (Borrelia garinii subsp. bavariensis (strain ATCC BAA-2496 / DSM 23469 / PBi) (Borreliella bavariensis)).